We begin with the raw amino-acid sequence, 539 residues long: MSVKGITPQELAAYGIHNVSEIVYNPSYDLLFEEETKPTLEGYERGTLTTTGAIAVDTGIFTGRSPKDKYIVRDAITQDTVWWADQGKGKNDNKPLSQEIWSHLKGLVTEQLSGKRLFVVDTFCGANADTRLQVRFITEVAWQAHFVKNMFIRPSDEELARFEPDFIVMNGAKCTNPQWKEQGLNSENFVAFNLTERMQLIGGTWYGGEMKKGMFSMMNYLLPLKGIASMHCSANVGEKGDVAIFFGLSGTGKTTLSTDPKRKLIGDDEHGWDDDGVFNFEGGCYAKTIKLSEEAEPDIYHAIKRDALLENVVVLADGTVDFNDGSKTENTRVSYPIYHIDNIVKPVSKAGHATKVIFLTADAFGVLPPVSRLTANQTQYHFLSGFTAKLAGTERGVTEPTPTFSACFGAAFLSLHPTQYAEVLVKRMQAVGAQAYLVNTGWNGTGKRISIKDTRAIIDAILNGEIDKAETFTLPIFDLAVPMSLPGVNPDILDPRDTYADKAQWQEKAEDLAKRFATNFDKYTDTPAGAALVSAGPKI.

Residues R64, Y206, and K212 each coordinate substrate. ATP is bound by residues K212, H231, and 247-255 (GLSGTGKTT). Mn(2+) contacts are provided by K212 and H231. Residue D268 participates in Mn(2+) binding. Residues E296, R332, 448–449 (RI), and T454 each bind ATP. R332 lines the substrate pocket.

Belongs to the phosphoenolpyruvate carboxykinase (ATP) family. As to quaternary structure, monomer. The cofactor is Mn(2+).

It localises to the cytoplasm. It carries out the reaction oxaloacetate + ATP = phosphoenolpyruvate + ADP + CO2. It functions in the pathway carbohydrate biosynthesis; gluconeogenesis. Its function is as follows. Involved in the gluconeogenesis. Catalyzes the conversion of oxaloacetate (OAA) to phosphoenolpyruvate (PEP) through direct phosphoryl transfer between the nucleoside triphosphate and OAA. The chain is Phosphoenolpyruvate carboxykinase (ATP) from Yersinia pseudotuberculosis serotype O:1b (strain IP 31758).